The following is a 256-amino-acid chain: Alcohol dehydrogenase (256 aa).

12–35 (FVAGLGGIGLDTSKELVKRDLKNL) provides a ligand contact to NAD(+). Ser140 contributes to the substrate binding site. Catalysis depends on Tyr153, which acts as the Proton acceptor.

Belongs to the short-chain dehydrogenases/reductases (SDR) family. In terms of assembly, homodimer.

The catalysed reaction is a primary alcohol + NAD(+) = an aldehyde + NADH + H(+). It carries out the reaction a secondary alcohol + NAD(+) = a ketone + NADH + H(+). This chain is Alcohol dehydrogenase (Adh), found in Drosophila mauritiana (Fruit fly).